Consider the following 120-residue polypeptide: Large ribosomal subunit protein uL18c (120 aa).

Belongs to the universal ribosomal protein uL18 family. As to quaternary structure, part of the 50S ribosomal subunit; contacts the 5S rRNA.

It is found in the plastid. It localises to the chloroplast. In terms of biological role, binds 5S rRNA, forms part of the central protuberance of the 50S subunit. The protein is Large ribosomal subunit protein uL18c (rpl18) of Pyropia yezoensis (Susabi-nori).